The chain runs to 737 residues: tRNA-dihydrouridine(47) synthase [NAD(P)(+)] (737 aa).

Basic and acidic residues-rich tracts occupy residues 1 to 11 and 24 to 33; these read MESQETAKRPI and PATKRVKLDD. Residues 1 to 127 form a disordered region; sequence MESQETAKRP…GKKKRPKGQN (127 aa). A compositionally biased stretch (low complexity) spans 35–44; the sequence is PVPQIQEEPS. Basic and acidic residues predominate over residues 57 to 82; that stretch reads EDEKPTEQRQDDRDKRRGIAPIKKEY. 2 C3H1-type zinc fingers span residues 142–166 and 187–208; these read CNSV…NALH and CPVW…VESH. FMN is bound by residues 332-334 and Gln-407; that span reads PLT. Residue Cys-439 is the Proton donor of the active site. FMN-binding positions include Lys-479, His-520, 577 to 579, and 601 to 602; these read NGD and GR.

This sequence belongs to the Dus family. Dus3 subfamily. FMN serves as cofactor.

Its subcellular location is the cytoplasm. It localises to the nucleus. It carries out the reaction 5,6-dihydrouridine(47) in tRNA + NAD(+) = uridine(47) in tRNA + NADH + H(+). It catalyses the reaction 5,6-dihydrouridine(47) in tRNA + NADP(+) = uridine(47) in tRNA + NADPH + H(+). The enzyme catalyses a 5,6-dihydrouridine in mRNA + NAD(+) = a uridine in mRNA + NADH + H(+). The catalysed reaction is a 5,6-dihydrouridine in mRNA + NADP(+) = a uridine in mRNA + NADPH + H(+). Functionally, catalyzes the synthesis of dihydrouridine, a modified base found in the D-loop of most tRNAs. Specifically modifies U47 in cytoplasmic tRNAs. Catalyzes the synthesis of dihydrouridine in some mRNAs, thereby affecting their translation. The protein is tRNA-dihydrouridine(47) synthase [NAD(P)(+)] (dus-3) of Neurospora crassa (strain ATCC 24698 / 74-OR23-1A / CBS 708.71 / DSM 1257 / FGSC 987).